The sequence spans 180 residues: Small ribosomal subunit protein bS18 (180 aa).

Disordered stretches follow at residues 1–26 (MKNKLKKKKNPKGTKKIKAKAKAHKV) and 53–82 (YSDKESYSDKESYSDKESYSDKESYSDKES).

Belongs to the bacterial ribosomal protein bS18 family. In terms of assembly, part of the 30S ribosomal subunit. Forms a tight heterodimer with protein bS6.

Functionally, binds as a heterodimer with protein bS6 to the central domain of the 16S rRNA, where it helps stabilize the platform of the 30S subunit. This Karelsulcia muelleri (strain GWSS) (Sulcia muelleri) protein is Small ribosomal subunit protein bS18.